Here is a 190-residue protein sequence, read N- to C-terminus: Female-specific histamine-binding protein 2 (190 aa).

An N-terminal signal peptide occupies residues 1–19 (MKLLILSLALVLALSQVKG). Ser39, Asp43, Tyr55, Asp58, Trp61, Glu101, Phe117, Tyr119, Phe127, Asp139, Glu154, and Trp156 together coordinate histamine. Disulfide bonds link Cys67-Cys188 and Cys138-Cys167.

It belongs to the calycin superfamily. Histamine-binding salivary protein family. As to quaternary structure, monomer. As to expression, expressed in salivary glands.

Its subcellular location is the secreted. Its function is as follows. Salivary tick protein that acts by scavenging histamine at the wound site, outcompeting histamine receptors for histamine, thereby overcoming host inflammatory responses. Binds histamine with a high-affinity (Kd=1.7 nM). Contains two binding histamine sites (H and L), that appear to bind histamine with differing affinities (high and low). This Rhipicephalus appendiculatus (Brown ear tick) protein is Female-specific histamine-binding protein 2.